Here is a 284-residue protein sequence, read N- to C-terminus: 2-dehydro-3-deoxyphosphooctonate aldolase (284 aa).

It belongs to the KdsA family.

The protein localises to the cytoplasm. It catalyses the reaction D-arabinose 5-phosphate + phosphoenolpyruvate + H2O = 3-deoxy-alpha-D-manno-2-octulosonate-8-phosphate + phosphate. Its pathway is carbohydrate biosynthesis; 3-deoxy-D-manno-octulosonate biosynthesis; 3-deoxy-D-manno-octulosonate from D-ribulose 5-phosphate: step 2/3. It functions in the pathway bacterial outer membrane biogenesis; lipopolysaccharide biosynthesis. This Burkholderia cenocepacia (strain HI2424) protein is 2-dehydro-3-deoxyphosphooctonate aldolase.